A 283-amino-acid polypeptide reads, in one-letter code: uncharacterized protein (283 aa).

The Proton donor role is filled by Y55.

The protein belongs to the aldo/keto reductase family.

It is found in the cytoplasm. The protein localises to the nucleus. This is an uncharacterized protein from Schizosaccharomyces pombe (strain 972 / ATCC 24843) (Fission yeast).